Here is a 98-residue protein sequence, read N- to C-terminus: Small ribosomal subunit protein bS18 (98 aa).

This sequence belongs to the bacterial ribosomal protein bS18 family. As to quaternary structure, part of the 30S ribosomal subunit. Forms a tight heterodimer with protein bS6.

Its function is as follows. Binds as a heterodimer with protein bS6 to the central domain of the 16S rRNA, where it helps stabilize the platform of the 30S subunit. The chain is Small ribosomal subunit protein bS18 from Flavobacterium johnsoniae (strain ATCC 17061 / DSM 2064 / JCM 8514 / BCRC 14874 / CCUG 350202 / NBRC 14942 / NCIMB 11054 / UW101) (Cytophaga johnsonae).